The primary structure comprises 429 residues: Glutamate-1-semialdehyde 2,1-aminomutase (429 aa).

Residue K265 is modified to N6-(pyridoxal phosphate)lysine.

It belongs to the class-III pyridoxal-phosphate-dependent aminotransferase family. HemL subfamily. In terms of assembly, homodimer. Pyridoxal 5'-phosphate is required as a cofactor.

It localises to the cytoplasm. The enzyme catalyses (S)-4-amino-5-oxopentanoate = 5-aminolevulinate. Its pathway is porphyrin-containing compound metabolism; protoporphyrin-IX biosynthesis; 5-aminolevulinate from L-glutamyl-tRNA(Glu): step 2/2. This is Glutamate-1-semialdehyde 2,1-aminomutase from Ectopseudomonas mendocina (strain ymp) (Pseudomonas mendocina).